The sequence spans 61 residues: Metallothionein-1A (61 aa).

N-acetylmethionine is present on Met-1. Residues 1-29 (MDPNCSCPTGGSCSCAGSCTCKACRCTSC) form a beta region. Residues Cys-5, Cys-7, Cys-13, Cys-15, Cys-19, Cys-21, Cys-24, Cys-26, Cys-29, Cys-33, Cys-34, Cys-36, Cys-37, Cys-41, Cys-44, Cys-48, Cys-50, and Cys-57 each coordinate a divalent metal cation. The segment at 30–61 (KKSCCSCCPAGCARCAQGCICKGASDKCSCCA) is alpha. Ser-58 bears the Phosphoserine mark. Residues Cys-59 and Cys-60 each coordinate a divalent metal cation.

This sequence belongs to the metallothionein superfamily. Type 1 family. Monomer.

Metallothioneins have a high content of cysteine residues that bind various heavy metals; these proteins are transcriptionally regulated by both heavy metals and glucocorticoids. The sequence is that of Metallothionein-1A (MT1A) from Sus scrofa (Pig).